Consider the following 460-residue polypeptide: Tyrosine phenol-lyase (460 aa).

Lysine 260 carries the N6-(pyridoxal phosphate)lysine modification.

The protein belongs to the beta-eliminating lyase family. Homotetramer. Requires pyridoxal 5'-phosphate as cofactor.

It catalyses the reaction L-tyrosine + H2O = phenol + pyruvate + NH4(+). The chain is Tyrosine phenol-lyase from Fusobacterium nucleatum subsp. nucleatum (strain ATCC 25586 / DSM 15643 / BCRC 10681 / CIP 101130 / JCM 8532 / KCTC 2640 / LMG 13131 / VPI 4355).